A 512-amino-acid polypeptide reads, in one-letter code: Cytochrome P450 77A4 (512 aa).

The chain crosses the membrane as a helical span at residues 9 to 29 (PTSLDFTFFAIIISGFVFIIT). Cys-456 is a binding site for heme.

Belongs to the cytochrome P450 family. The cofactor is heme.

The protein localises to the membrane. Catalyzes the epoxidation of physiological unsaturated fatty acids in vitro. Can use laurate, oleate, linoleate, linolenate and vernolate as substrate. The sequence is that of Cytochrome P450 77A4 (CYP77A4) from Arabidopsis thaliana (Mouse-ear cress).